Here is a 367-residue protein sequence, read N- to C-terminus: Pepsin A (367 aa).

A propeptide spans 1–42 (SIHRVPLKKGKSLRKQLKDHGLLEDFLKKHPYNPASKYHPVL) (activation peptide). Residues 59 to 364 (YYGTISIGTP…DRANNKVGLS (306 aa)) form the Peptidase A1 domain. Asp77 is a catalytic residue. An intrachain disulfide couples Cys90 to Cys95. A glycan (N-linked (GlcNAc...) asparagine) is linked at Asn113. The cysteines at positions 251 and 255 are disulfide-linked. Asp260 is a catalytic residue. An intrachain disulfide couples Cys290 to Cys323.

The protein belongs to the peptidase A1 family.

The enzyme catalyses Preferential cleavage: hydrophobic, preferably aromatic, residues in P1 and P1' positions. Cleaves 1-Phe-|-Val-2, 4-Gln-|-His-5, 13-Glu-|-Ala-14, 14-Ala-|-Leu-15, 15-Leu-|-Tyr-16, 16-Tyr-|-Leu-17, 23-Gly-|-Phe-24, 24-Phe-|-Phe-25 and 25-Phe-|-Tyr-26 bonds in the B chain of insulin.. In terms of biological role, shows particularly broad specificity; although bonds involving phenylalanine and leucine are preferred, many others are also cleaved to some extent. The polypeptide is Pepsin A (PGA) (Gallus gallus (Chicken)).